A 145-amino-acid chain; its full sequence is Large ribosomal subunit protein uL13 (145 aa).

This sequence belongs to the universal ribosomal protein uL13 family. As to quaternary structure, part of the 50S ribosomal subunit.

Functionally, this protein is one of the early assembly proteins of the 50S ribosomal subunit, although it is not seen to bind rRNA by itself. It is important during the early stages of 50S assembly. The sequence is that of Large ribosomal subunit protein uL13 from Geobacillus kaustophilus (strain HTA426).